The chain runs to 229 residues: MPIGIPKVAYRIPGEAVSTYVDVYNRLYRERILFLGEDLDDEVANQLIGVMVFLNSEDDTKGIFFYINSPGGSMNAGLGVYDMIQHVNVDVTTICMGLAASMASFILAGGTPGQRLMFPHARVMLHQPMGGNGGKAKYMVEESVEVKRLRELIAHLYVKRTGQSLEKIRKDMNRDNFMRPRQAKEYGLIDHMVTNVNELDELDKQSNDLKKLGKVNLTNIETSNKSELK.

Serine 101 (nucleophile) is an active-site residue. The active site involves histidine 126.

It belongs to the peptidase S14 family. Component of the chloroplastic Clp protease core complex.

Its subcellular location is the plastid. The protein localises to the chloroplast stroma. The catalysed reaction is Hydrolysis of proteins to small peptides in the presence of ATP and magnesium. alpha-casein is the usual test substrate. In the absence of ATP, only oligopeptides shorter than five residues are hydrolyzed (such as succinyl-Leu-Tyr-|-NHMec, and Leu-Tyr-Leu-|-Tyr-Trp, in which cleavage of the -Tyr-|-Leu- and -Tyr-|-Trp bonds also occurs).. Cleaves peptides in various proteins in a process that requires ATP hydrolysis. Has a chymotrypsin-like activity. Plays a major role in the degradation of misfolded proteins. This chain is ATP-dependent Clp protease proteolytic subunit, found in Mesostigma viride (Green alga).